The sequence spans 569 residues: Beta-lactamase-like protein 4 (569 aa).

Positions 1–19 (MKYYLYLFLLFTFANLLYS) are cleaved as a signal peptide. N-linked (GlcNAc...) asparagine glycans are attached at residues asparagine 87, asparagine 172, asparagine 239, asparagine 240, asparagine 250, asparagine 299, asparagine 343, asparagine 412, asparagine 419, asparagine 436, asparagine 468, asparagine 509, and asparagine 535.

This sequence belongs to the beta-lactamase family.

It localises to the secreted. The polypeptide is Beta-lactamase-like protein 4 (Dictyostelium discoideum (Social amoeba)).